A 238-amino-acid polypeptide reads, in one-letter code: Ribonuclease 3 (238 aa).

The 126-residue stretch at 11–136 folds into the RNase III domain; it reads RARLEAAIGY…LIAAIYLDGG (126 aa). Glu-49 contributes to the Mg(2+) binding site. Asp-53 is an active-site residue. Mg(2+) contacts are provided by Asp-122 and Glu-125. The active site involves Glu-125. One can recognise a DRBM domain in the interval 161-230; sequence DAKTELQEWA…AMKLLEREGV (70 aa). Positions 180-193 are enriched in basic and acidic residues; that stretch reads YRTEDRSGPDHDPR. The disordered stretch occupies residues 180–215; it reads YRTEDRSGPDHDPRFTVTVEVDGIDPETGVDRSKRG.

The protein belongs to the ribonuclease III family. In terms of assembly, homodimer. The cofactor is Mg(2+).

Its subcellular location is the cytoplasm. The catalysed reaction is Endonucleolytic cleavage to 5'-phosphomonoester.. Digests double-stranded RNA. Involved in the processing of primary rRNA transcript to yield the immediate precursors to the large and small rRNAs (23S and 16S). Processes some mRNAs, and tRNAs when they are encoded in the rRNA operon. Processes pre-crRNA and tracrRNA of type II CRISPR loci if present in the organism. The protein is Ribonuclease 3 of Sinorhizobium medicae (strain WSM419) (Ensifer medicae).